The sequence spans 843 residues: Pentatricopeptide repeat-containing protein At4g21880, mitochondrial (843 aa).

PPR repeat units lie at residues 392-426 (SSTSYENLVSYLCGSNEVVTALDIVENMCEAGLVI), 427-461 (SANILHSLLQAIEQILEFNLVQRIYSIMSNKSVKP), 462-496 (NSETFRKSINLCIRIKDFEGAYNMLGNLKNFNLAP), 497-531 (NSSMYNSIMAGYFREKKVNSALKVLKEMKEADVKP), 532-562 (DSVTFSYLINYCGEEATIAKYYKEMKQAGVE), 564-594 (NKHVYMSLVKAYASCGQFEKAKQVLMDLEVP), and 598-632 (HNELKSVLISALASNGNITEALSIYEEMKKLRCPV).

This sequence belongs to the PPR family. P subfamily.

It localises to the mitochondrion. The chain is Pentatricopeptide repeat-containing protein At4g21880, mitochondrial from Arabidopsis thaliana (Mouse-ear cress).